A 404-amino-acid chain; its full sequence is MNKQIQTEADELGFFGEYGGQYVPETLMPAIIELKKAYKEAKADPEFQRELEYYLSEYVGRATPLTYAASYTESLGGAKIYLKREDLNHTGAHKINNALGQALLAKRMGKKKLVAETGAGQHGVASATVAALFDMELVVFMGSEDIKRQQLNVFRMELLGAKVVAVEDGQGTLSDAVNKALQYWVSHVDDTHYLLGSALGPDPFPTIVRDFQSVIGKEIKSQILKKEGRLPDAIVACIGGGSNAIGTFYPFIKDDVALYGVEAAGQGDDTDKHALAIGKGSPGVLHGTKMYLIQDEDGQVQLAHSISAGLDYPGIGPEHSYYHDIGRVTFENASDTQAMNALINFTKHEGIIPAIESAHALSYVERLAPTMSKEDIIVVTISGRGDKDMETIRQYMVERGLAND.

The residue at position 94 (K94) is an N6-(pyridoxal phosphate)lysine.

Belongs to the TrpB family. Tetramer of two alpha and two beta chains. Pyridoxal 5'-phosphate is required as a cofactor.

It carries out the reaction (1S,2R)-1-C-(indol-3-yl)glycerol 3-phosphate + L-serine = D-glyceraldehyde 3-phosphate + L-tryptophan + H2O. It participates in amino-acid biosynthesis; L-tryptophan biosynthesis; L-tryptophan from chorismate: step 5/5. Functionally, the beta subunit is responsible for the synthesis of L-tryptophan from indole and L-serine. This Staphylococcus aureus (strain USA300) protein is Tryptophan synthase beta chain.